The following is a 146-amino-acid chain: 3-dehydroquinate dehydratase (146 aa).

Tyr-22 (proton acceptor) is an active-site residue. Residues Asn-73, His-79, and Asp-86 each coordinate substrate. His-99 acts as the Proton donor in catalysis. Substrate is bound by residues 100 to 101 (IS) and Arg-110.

Belongs to the type-II 3-dehydroquinase family. Homododecamer.

The catalysed reaction is 3-dehydroquinate = 3-dehydroshikimate + H2O. It functions in the pathway metabolic intermediate biosynthesis; chorismate biosynthesis; chorismate from D-erythrose 4-phosphate and phosphoenolpyruvate: step 3/7. Catalyzes a trans-dehydration via an enolate intermediate. The chain is 3-dehydroquinate dehydratase from Prochlorococcus marinus subsp. pastoris (strain CCMP1986 / NIES-2087 / MED4).